We begin with the raw amino-acid sequence, 235 residues long: Small ribosomal subunit protein eS6 (235 aa).

Residues 190–212 form a disordered region; the sequence is GFHPRERGERRRKSVRGRMIPDP.

It belongs to the eukaryotic ribosomal protein eS6 family.

The protein is Small ribosomal subunit protein eS6 of Aeropyrum pernix (strain ATCC 700893 / DSM 11879 / JCM 9820 / NBRC 100138 / K1).